The chain runs to 117 residues: Large ribosomal subunit protein uL23 (117 aa).

This sequence belongs to the universal ribosomal protein uL23 family. Part of the 50S ribosomal subunit. Contacts protein L29, and trigger factor when it is bound to the ribosome.

In terms of biological role, one of the early assembly proteins it binds 23S rRNA. One of the proteins that surrounds the polypeptide exit tunnel on the outside of the ribosome. Forms the main docking site for trigger factor binding to the ribosome. The chain is Large ribosomal subunit protein uL23 from Acetivibrio thermocellus (strain ATCC 27405 / DSM 1237 / JCM 9322 / NBRC 103400 / NCIMB 10682 / NRRL B-4536 / VPI 7372) (Clostridium thermocellum).